Here is an 878-residue protein sequence, read N- to C-terminus: uncharacterized protein (878 aa).

4 disordered regions span residues 58–223 (IGVD…RTKF), 306–494 (KGRL…TSSR), 585–652 (KLLE…SGKL), and 679–709 (PSSM…GGGG). Low complexity-rich tracts occupy residues 64 to 213 (NGNS…SGTS), 314 to 325 (SNSSQSSDSDYS), and 335 to 355 (IPNS…PNSN). A compositionally biased stretch (polar residues) spans 362–372 (RNPNQLSSTNV). Low complexity predominate over residues 373 to 494 (NNNINNSGGS…TPTTPVTSSR (122 aa)). Residues 585-595 (KLLEQQKEQQQ) are compositionally biased toward basic and acidic residues. Residues 596-605 (KEQQQQQKQQ) show a composition bias toward low complexity. Positions 615–624 (TDDEDEDDDE) are enriched in acidic residues. Composition is skewed to low complexity over residues 639-652 (NLSN…SGKL) and 679-704 (PSSM…SSSS).

This is an uncharacterized protein from Dictyostelium discoideum (Social amoeba).